The following is a 249-amino-acid chain: 3-deoxy-D-manno-octulosonic acid kinase (249 aa).

The active site involves Asp175.

This sequence belongs to the protein kinase superfamily. KdkA/RfaP family.

The protein localises to the cell inner membrane. The catalysed reaction is an alpha-Kdo-(2-&gt;6)-lipid IVA + ATP = a 4-O-phospho-alpha-Kdo-(2-&gt;6)-lipid IVA + ADP + H(+). Its pathway is bacterial outer membrane biogenesis; LPS core biosynthesis. In terms of biological role, catalyzes the ATP-dependent phosphorylation of the 3-deoxy-D-manno-octulosonic acid (Kdo) residue in Kdo-lipid IV(A) at the 4-OH position. This chain is 3-deoxy-D-manno-octulosonic acid kinase, found in Stenotrophomonas maltophilia (strain K279a).